Consider the following 278-residue polypeptide: MALKSFNPTTPSQRQLVIVDRAGLYKGKPVKTLTEGLSSKGGRNNLGRITVRFQGGGHKRTYRLVDFKRRKFDVEGTVERLEYDPNRTAFIALVNYADGEQAYILAPQRLAAGDKVIASDKAVDVKPGNTMPLQFIPVGSIIHNVEMKPGKGGQIARSAGTYAQLVGRDQGMAILRLNSGEQRLVHGSCLASIGAVSNPDHGNINDGKAGRSRWRGKRPHVRGVVMNPVDHPHGGGEGRTSGGRHPVTPWGKPTKGKRTRSNKSTDKFIMRSRHQRKK.

The tract at residues H201 to K278 is disordered. Basic residues predominate over residues G210–V221.

Belongs to the universal ribosomal protein uL2 family. As to quaternary structure, part of the 50S ribosomal subunit. Forms a bridge to the 30S subunit in the 70S ribosome.

In terms of biological role, one of the primary rRNA binding proteins. Required for association of the 30S and 50S subunits to form the 70S ribosome, for tRNA binding and peptide bond formation. It has been suggested to have peptidyltransferase activity; this is somewhat controversial. Makes several contacts with the 16S rRNA in the 70S ribosome. The chain is Large ribosomal subunit protein uL2 from Sinorhizobium fredii (strain NBRC 101917 / NGR234).